A 207-amino-acid chain; its full sequence is Outer-membrane lipoprotein LolB (207 aa).

The N-terminal stretch at 1–21 (MTLPDFRLIRLLPLASLVLTA) is a signal peptide. Residue Cys22 is the site of N-palmitoyl cysteine attachment. Cys22 carries the S-diacylglycerol cysteine lipid modification.

This sequence belongs to the LolB family. As to quaternary structure, monomer.

Its subcellular location is the cell outer membrane. Its function is as follows. Plays a critical role in the incorporation of lipoproteins in the outer membrane after they are released by the LolA protein. This Salmonella arizonae (strain ATCC BAA-731 / CDC346-86 / RSK2980) protein is Outer-membrane lipoprotein LolB.